Here is a 424-residue protein sequence, read N- to C-terminus: Glutamate-1-semialdehyde 2,1-aminomutase (424 aa).

K264 is modified (N6-(pyridoxal phosphate)lysine).

This sequence belongs to the class-III pyridoxal-phosphate-dependent aminotransferase family. HemL subfamily. Homodimer. It depends on pyridoxal 5'-phosphate as a cofactor.

The protein localises to the cytoplasm. It carries out the reaction (S)-4-amino-5-oxopentanoate = 5-aminolevulinate. It functions in the pathway porphyrin-containing compound metabolism; protoporphyrin-IX biosynthesis; 5-aminolevulinate from L-glutamyl-tRNA(Glu): step 2/2. The sequence is that of Glutamate-1-semialdehyde 2,1-aminomutase (hemL) from Aquifex aeolicus (strain VF5).